Consider the following 322-residue polypeptide: Large ribosomal subunit protein uL10 (322 aa).

Residues 294–322 are disordered; sequence APAAAAKAEKEEEPAEESDDEMGFGLFDE. The span at 304–322 shows a compositional bias: acidic residues; the sequence is EEEPAEESDDEMGFGLFDE.

This sequence belongs to the universal ribosomal protein uL10 family. P0 forms a pentameric complex by interaction with dimers of P1 and P2. Phosphorylated.

Functionally, ribosomal protein P0 is the functional equivalent of E.coli protein L10. This chain is Large ribosomal subunit protein uL10, found in Lupinus luteus (European yellow lupine).